A 184-amino-acid chain; its full sequence is MTNSYALSPAIIAAVRPPASQDYLVAASLSGRKSINSSSSSIFVPISLSTSYGRSKCAFSISRKNPKSTIRCDIAVKSAASVDADADLSSSTSLETEEDEKAKEKIGARVRVTVPLKVYHVVRVPEVELMGMEGFIKDYVVLWKGKKISANLPFKVQFVKEIEGRGPVKFFTHLKEDEFELIDP.

Residues M1–R71 constitute a chloroplast transit peptide.

Belongs to the ferredoxin thioredoxin reductase alpha subunit family. In terms of assembly, heterodimer of subunit A (variable subunit) and subunit B (catalytic subunit). Heterodimeric FTR forms a complex with ferredoxin and thioredoxin.

The protein resides in the plastid. The protein localises to the chloroplast. In terms of biological role, variable subunit of the ferredoxin-thioredoxin reductase (FTR), which catalyzes the two-electron reduction of thioredoxins by the electrons provided by reduced ferredoxin. This Arabidopsis thaliana (Mouse-ear cress) protein is Ferredoxin-thioredoxin reductase subunit A2, chloroplastic.